The chain runs to 976 residues: Serine/threonine-protein kinase CLA4 (976 aa).

Positions 1-46 are disordered; the sequence is MTSIYTSDLKNHRRAPPPPNGAAGSGSGSSSGSGSGSGSGSGSGSL. A compositionally biased stretch (gly residues) spans 23 to 43; the sequence is AGSGSGSSSGSGSGSGSGSGS. The PH domain maps to 73–184; the sequence is SKRQSGWVHV…WLDAFTTKCP (112 aa). The segment at 207–231 is disordered; it reads LTNGSLNGNSSSSPTSGLSSSSVLT. In terms of domain architecture, CRIB spans 237–250; that stretch reads VSGPINFTHKVHVG. Disordered stretches follow at residues 298–522 and 559–658; these read GGNS…KIHP and SKKS…QLKK. Low complexity-rich tracts occupy residues 313 to 332 and 371 to 411; these read NSKT…AKNN and LNGS…PLNN. A compositionally biased stretch (polar residues) spans 430–440; sequence SGTSSDTYSNK. Residues 441–455 show a composition bias toward basic and acidic residues; that stretch reads NHQDRSGYEQQRQQR. Over residues 456–487 the composition is skewed to low complexity; sequence TDSSQQQQQQQKQHQYQQKSQQQQQQPLSSHQ. Over residues 496 to 505 the composition is skewed to pro residues; sequence QVPPTLPSSG. Low complexity predominate over residues 559–583; it reads SKKSQQQLASKQPSPPSSQQQQQKP. Polar residues predominate over residues 622–635; it reads NETSGVSKTPSPTD. A Protein kinase domain is found at 685 to 940; the sequence is FRIVEKAGQG…TDELLEHSFI (256 aa). Residues 691-699 and lysine 715 each bind ATP; that span reads AGQGASGNV. Aspartate 808 acts as the Proton acceptor in catalysis.

It belongs to the protein kinase superfamily. STE Ser/Thr protein kinase family. STE20 subfamily. In terms of assembly, interacts (via the CRIB domain) with CDC42.

It carries out the reaction L-seryl-[protein] + ATP = O-phospho-L-seryl-[protein] + ADP + H(+). The catalysed reaction is L-threonyl-[protein] + ATP = O-phospho-L-threonyl-[protein] + ADP + H(+). Its function is as follows. Ser/Thr kinase required for wild-type filamentous growth, chlamydospore formation, and virulence in mouse systemic infection. The polypeptide is Serine/threonine-protein kinase CLA4 (CLA4) (Candida albicans (strain SC5314 / ATCC MYA-2876) (Yeast)).